The following is a 769-amino-acid chain: Calcium up-regulated protein B (769 aa).

A disordered region spans residues 1–22 (MINIEDISKSSNQSEEKQLKST). 2 Ricin B-type lectin domains span residues 25–145 (KPKY…WTTF) and 158–296 (FQSK…WITN).

It belongs to the cup family.

The protein localises to the cytoplasm. It localises to the membrane. Functionally, may play an important role in stabilizing and/or regulating the cell membrane during Ca(2+) stress or certain stages of development. In Dictyostelium discoideum (Social amoeba), this protein is Calcium up-regulated protein B (cupB).